We begin with the raw amino-acid sequence, 172 residues long: 3-hydroxydecanoyl-[acyl-carrier-protein] dehydratase (172 aa).

Residue H71 is part of the active site.

This sequence belongs to the thioester dehydratase family. FabA subfamily. As to quaternary structure, homodimer.

The protein localises to the cytoplasm. It carries out the reaction a (3R)-hydroxyacyl-[ACP] = a (2E)-enoyl-[ACP] + H2O. The catalysed reaction is (3R)-hydroxydecanoyl-[ACP] = (2E)-decenoyl-[ACP] + H2O. It catalyses the reaction (2E)-decenoyl-[ACP] = (3Z)-decenoyl-[ACP]. It participates in lipid metabolism; fatty acid biosynthesis. Necessary for the introduction of cis unsaturation into fatty acids. Catalyzes the dehydration of (3R)-3-hydroxydecanoyl-ACP to E-(2)-decenoyl-ACP and then its isomerization to Z-(3)-decenoyl-ACP. Can catalyze the dehydratase reaction for beta-hydroxyacyl-ACPs with saturated chain lengths up to 16:0, being most active on intermediate chain length. The chain is 3-hydroxydecanoyl-[acyl-carrier-protein] dehydratase from Sodalis glossinidius (strain morsitans).